A 603-amino-acid chain; its full sequence is Elongation factor 4 (603 aa).

Residues 2–184 form the tr-type G domain; that stretch reads NHIRNFSIIA…AVVARMPPPR (183 aa). Residues 14–19 and 131–134 contribute to the GTP site; these read DHGKST and NKMD.

Belongs to the TRAFAC class translation factor GTPase superfamily. Classic translation factor GTPase family. LepA subfamily.

The protein resides in the cell inner membrane. The enzyme catalyses GTP + H2O = GDP + phosphate + H(+). Required for accurate and efficient protein synthesis under certain stress conditions. May act as a fidelity factor of the translation reaction, by catalyzing a one-codon backward translocation of tRNAs on improperly translocated ribosomes. Back-translocation proceeds from a post-translocation (POST) complex to a pre-translocation (PRE) complex, thus giving elongation factor G a second chance to translocate the tRNAs correctly. Binds to ribosomes in a GTP-dependent manner. The polypeptide is Elongation factor 4 (Albidiferax ferrireducens (strain ATCC BAA-621 / DSM 15236 / T118) (Rhodoferax ferrireducens)).